The primary structure comprises 203 residues: Large ribosomal subunit protein bL25 (203 aa).

It belongs to the bacterial ribosomal protein bL25 family. CTC subfamily. Part of the 50S ribosomal subunit; part of the 5S rRNA/L5/L18/L25 subcomplex. Contacts the 5S rRNA. Binds to the 5S rRNA independently of L5 and L18.

In terms of biological role, this is one of the proteins that binds to the 5S RNA in the ribosome where it forms part of the central protuberance. The chain is Large ribosomal subunit protein bL25 from Cupriavidus metallidurans (strain ATCC 43123 / DSM 2839 / NBRC 102507 / CH34) (Ralstonia metallidurans).